The primary structure comprises 893 residues: Probable disease resistance protein At1g62630 (893 aa).

Residues 24–68 (GSYTHNLEKNLVALETTMEELKAKRDDLLRRLKREEDRGLQRLSE) are a coiled coil. The NB-ARC domain maps to 136–440 (TEQASTSAFE…CEEIIDGSEG (305 aa)). 179 to 186 (GMGGVGKT) contacts ATP. LRR repeat units lie at residues 516–537 (VVRR…YECM), 538–559 (ELTT…SEIK), 571–593 (KLAV…ISNL), 595–617 (SLKY…QELK), 618–640 (KIIH…SSLH), and 641–663 (NLKV…KELE).

It belongs to the disease resistance NB-LRR family.

Its function is as follows. Probable disease resistance protein. This is Probable disease resistance protein At1g62630 from Arabidopsis thaliana (Mouse-ear cress).